A 39-amino-acid polypeptide reads, in one-letter code: Fructose 5-dehydrogenase [NADP(+)] (39 aa).

The enzyme catalyses D-fructose + NADP(+) = 5-dehydro-D-fructose + NADPH + H(+). This chain is Fructose 5-dehydrogenase [NADP(+)], found in Erwinia citreus.